Consider the following 254-residue polypeptide: Urease accessory protein UreD (254 aa).

This sequence belongs to the UreD family. As to quaternary structure, ureD, UreF and UreG form a complex that acts as a GTP-hydrolysis-dependent molecular chaperone, activating the urease apoprotein by helping to assemble the nickel containing metallocenter of UreC. The UreE protein probably delivers the nickel.

The protein resides in the cytoplasm. In terms of biological role, required for maturation of urease via the functional incorporation of the urease nickel metallocenter. This Streptomyces coelicolor (strain ATCC BAA-471 / A3(2) / M145) protein is Urease accessory protein UreD.